Reading from the N-terminus, the 236-residue chain is 2,3,4,5-tetrahydropyridine-2,6-dicarboxylate N-acetyltransferase (236 aa).

Belongs to the transferase hexapeptide repeat family. DapH subfamily.

It catalyses the reaction (S)-2,3,4,5-tetrahydrodipicolinate + acetyl-CoA + H2O = L-2-acetamido-6-oxoheptanedioate + CoA. It functions in the pathway amino-acid biosynthesis; L-lysine biosynthesis via DAP pathway; LL-2,6-diaminopimelate from (S)-tetrahydrodipicolinate (acetylase route): step 1/3. Catalyzes the transfer of an acetyl group from acetyl-CoA to tetrahydrodipicolinate. The sequence is that of 2,3,4,5-tetrahydropyridine-2,6-dicarboxylate N-acetyltransferase from Lactiplantibacillus plantarum (strain ATCC BAA-793 / NCIMB 8826 / WCFS1) (Lactobacillus plantarum).